Here is a 2703-residue protein sequence, read N- to C-terminus: Serine/arginine repetitive matrix protein 2 (2703 aa).

Residue Met1 is modified to N-acetylmethionine. Residues 60-92 (HERKRRVELRCLELEEMMEEQGYEEQQIQEKVA) are a coiled coil. Lys101 is modified (N6-acetyllysine). Glycyl lysine isopeptide (Lys-Gly) (interchain with G-Cter in SUMO2) cross-links involve residues Lys108 and Lys130. The segment at 141–1007 (ISDSYVDGSS…SGSFHLCPGV (867 aa)) is disordered. Position 145 is a phosphotyrosine (Tyr145). Position 169 is an N6-acetyllysine (Lys169). Basic residues-rich tracts occupy residues 186–197 (KQKKKKKKKDRG) and 207–249 (RERK…KRSR). A sufficient for RNA-binding region spans residues 197–259 (GRRSESSSPR…STTPAPKSRR (63 aa)). A phosphoserine mark is found at Ser220 and Ser222. Positions 263-284 (STSADSASSSDTSRSRSRSAAA) are enriched in low complexity. Residues Ser295, Ser300, Ser310, Ser322, and Ser323 each carry the phosphoserine modification. Over residues 319–334 (QQPSSPAPSTKQSSSP) the composition is skewed to low complexity. The segment covering 335–345 (YEDKDKKEKSA) has biased composition (basic and acidic residues). A phosphoserine mark is found at Ser349, Ser351, Ser355, and Ser356. Phosphothreonine occurs at positions 357 and 365. Phosphoserine is present on residues Ser375, Ser385, Ser393, Ser396, Ser402, Ser406, Ser422, Ser433, Ser434, Ser435, Ser438, Ser452, Ser482, Ser484, Ser503, Ser505, Ser507, Ser531, Ser533, and Ser540. Polar residues predominate over residues 383-396 (PSSQEPVNPSSEAS). Residues 425–437 (PTKGSRHASSSPE) show a composition bias toward polar residues. Residues 459-533 (NRSHGRAKRD…SPQRRGRSRS (75 aa)) show a composition bias toward basic residues. Low complexity predominate over residues 534–543 (PQRPGWSRSR). Basic residues-rich tracts occupy residues 544-561 (NTQRRGRSRSARRGRSHS), 568-721 (GRSR…RRGR), and 730-740 (NKSRTSQRRSR). Phosphoserine occurs at positions 700, 702, and 704. Ser773, Ser775, and Ser778 each carry phosphoserine. A compositionally biased stretch (low complexity) spans 785–817 (SQTPTRRSRSGSSPPKQKSKTPPRQSRSNSPQP). A phosphoserine mark is found at Ser821 and Ser829. Polar residues-rich tracts occupy residues 829–851 (SVTNMQADECTATPQRQSHSESS) and 859–874 (RTPSRQSCSGSSPRVK). Thr831 and Thr841 each carry phosphothreonine. Phosphoserine occurs at positions 846, 850, and 851. Low complexity-rich tracts occupy residues 875-891 (SSTPPRQSPSRSSSPQP) and 898-919 (SPRGRSHSSSSSPSPSRVTSRT). Ser882, Ser909, Ser924, Ser926, Ser928, Ser940, Ser942, Ser944, Ser945, Ser946, and Ser949 each carry phosphoserine. A Phosphothreonine modification is found at Thr955. Polar residues predominate over residues 960–1000 (SGSTSPYLKSMLQTPPDQNLSGSKSPCPQKSRDSPTGSSGS). Ser962 and Ser964 each carry phosphoserine. Phosphotyrosine is present on Tyr966. Residue Thr973 is modified to Phosphothreonine. Phosphoserine occurs at positions 980, 984, and 993. A Phosphothreonine modification is found at Thr995. Ser997, Ser1000, Ser1011, Ser1037, and Ser1038 each carry phosphoserine. The span at 1024-1057 (VQQKGHTQTWPDTSSPEVMQTQVESPLLQSKSQT) shows a compositional bias: polar residues. The tract at residues 1024 to 1112 (VQQKGHTQTW…TKPDSSIYPL (89 aa)) is disordered. Thr1044 bears the Phosphothreonine mark. Phosphoserine is present on residues Ser1048, Ser1064, Ser1066, Ser1067, and Ser1068. Residues 1058–1068 (SPKGSLSRSSS) are compositionally biased toward low complexity. Thr1071 bears the Phosphothreonine mark. Ser1077, Ser1087, Ser1094, Ser1097, Ser1117, Ser1151, Ser1159, Ser1175, Ser1188, Ser1216, Ser1225, Ser1229, Ser1230, Ser1269, Ser1276, Ser1278, Ser1284, Ser1287, Ser1294, Ser1305, Ser1325, Ser1338, Ser1339, Ser1340, Ser1343, Ser1359, and Ser1360 each carry phosphoserine. Residues 1079–1092 (VKQDKSEISTDPKL) are compositionally biased toward basic and acidic residues. Positions 1136–2092 (IQEDVASSCI…RSPGMLEPLG (957 aa)) are disordered. Over residues 1146 to 1158 (PRDKFSPTQDRPE) the composition is skewed to basic and acidic residues. Over residues 1270-1284 (PEHKELSHSPPRENS) the composition is skewed to basic and acidic residues. Over residues 1285–1304 (FESSLEFKNSGPVSEVNTGF) the composition is skewed to polar residues. At Thr1370 the chain carries Phosphothreonine. The span at 1371-1387 (PSRERSSSASPELKDGL) shows a compositional bias: basic and acidic residues. A phosphoserine mark is found at Ser1372, Ser1378, and Ser1380. Position 1390 is a phosphothreonine (Thr1390). Positions 1397-1408 (SGSSPGLRDGSG) are enriched in low complexity. Phosphoserine occurs at positions 1400 and 1407. Thr1409 is modified (phosphothreonine). Over residues 1409 to 1431 (TPSRHSLSGSSPGMKDTPQTPSR) the composition is skewed to polar residues. Ser1414, Ser1416, Ser1418, and Ser1419 each carry phosphoserine. Thr1428 carries the post-translational modification Phosphothreonine. Phosphoserine occurs at positions 1438 and 1439. Thr1448 bears the Phosphothreonine mark. Phosphoserine occurs at positions 1453, 1455, 1457, 1458, and 1465. The segment covering 1454 to 1468 (HSPSSPERNNKSVTP) has biased composition (polar residues). Thr1467 carries the post-translational modification Phosphothreonine. A phosphoserine mark is found at Ser1473, Ser1475, Ser1477, and Ser1478. Over residues 1475–1489 (SESSVEQKNLARTSP) the composition is skewed to polar residues. Position 1487 is a phosphothreonine (Thr1487). The segment covering 1490-1499 (GQRSRSGSSQ) has biased composition (low complexity). A phosphoserine mark is found at Ser1493, Ser1495, Ser1497, Ser1498, and Ser1508. Basic and acidic residues predominate over residues 1511 to 1523 (ERSESDSSPDSKP). Over residues 1524–1533 (KTRTPLRQRS) the composition is skewed to basic residues. Residues Ser1533, Ser1535, Ser1537, Ser1538, Ser1554, Ser1556, Ser1557, Ser1572, Ser1576, Ser1577, Ser1604, Ser1614, Ser1647, Ser1649, and Ser1650 each carry the phosphoserine modification. Residues 1604–1613 (SPEGSSSSES) show a composition bias toward low complexity. Residues 1637–1647 (KSHTPPRRRSS) are compositionally biased toward basic residues. Thr1654 is subject to Phosphothreonine. Phosphoserine occurs at positions 1683, 1685, 1687, 1688, 1718, and 1720. Composition is skewed to basic residues over residues 1725 to 1745 (GLQRSRSRSRREKTRTTRRRD) and 1754 to 1772 (SRRRQRSRSRSRVTRRRRG). 6 positions are modified to phosphoserine: Ser1774, Ser1778, Ser1810, Ser1813, Ser1832, and Ser1834. Residues 1776-1789 (YHSRSPTRQESSRT) show a composition bias toward low complexity. A compositionally biased stretch (basic residues) spans 1790–1810 (SSRRRRGRSRTPLTSRKRSRS). The segment covering 1818 to 2020 (KRSRSRASPA…PRAARGKRSL (203 aa)) has biased composition (basic residues). Position 1836 is a phosphothreonine (Thr1836). A phosphoserine mark is found at Ser1840 and Ser1846. Thr1848 carries the post-translational modification Phosphothreonine. Phosphoserine is present on residues Ser1849, Ser1869, Ser1872, Ser1876, and Ser1878. A phosphothreonine mark is found at Thr1880 and Thr1884. Phosphoserine occurs at positions 1898 and 1900. Phosphothreonine is present on residues Thr1902 and Thr1906. A phosphoserine mark is found at Ser1910 and Ser1912. Thr1914 and Thr1918 each carry phosphothreonine. 3 positions are modified to phosphoserine: Ser1922, Ser1924, and Ser1927. Thr1930 bears the Phosphothreonine mark. Residues Ser1936, Ser1939, Ser1948, Ser1951, Ser1960, Ser1963, Ser1970, and Ser1972 each carry the phosphoserine modification. Thr1974 is modified (phosphothreonine). 2 positions are modified to phosphoserine: Ser1982 and Ser1984. Thr1986 carries the phosphothreonine modification. Ser1994, Ser1996, Ser1998, and Ser2019 each carry phosphoserine. A Phosphothreonine modification is found at Thr2021. Residues 2022–2047 (RSPPAIRRRSASGSSSDRSRSATPPA) show a composition bias toward low complexity. Residues Ser2023 and Ser2042 each carry the phosphoserine modification. A Phosphothreonine modification is found at Thr2044. Ser2052 and Ser2054 each carry phosphoserine. Thr2056 is modified (phosphothreonine). The span at 2062-2076 (SSSRMSCFSRPSMSP) shows a compositional bias: low complexity. 4 positions are modified to phosphoserine: Ser2070, Ser2073, Ser2075, and Ser2084. Thr2096 carries the phosphothreonine modification. Residues Arg2146, Arg2159, Arg2183, and Arg2198 each carry the omega-N-methylarginine modification. Phosphoserine is present on Ser2224. 2 positions are modified to omega-N-methylarginine: Arg2226 and Arg2240. Residues Thr2241 and Thr2254 each carry the phosphothreonine modification. Position 2262 is a phosphoserine (Ser2262). A disordered region spans residues 2263 to 2703 (LTGSGTPPTA…SNRHRSSRSP (441 aa)). 2 positions are modified to phosphothreonine: Thr2268 and Thr2281. Residues 2269 to 2283 (PPTAANYPSSSRTPQ) are compositionally biased toward polar residues. Arg2295 carries the post-translational modification Omega-N-methylarginine. 3 positions are modified to phosphoserine: Ser2296, Ser2321, and Ser2329. Thr2334 carries the phosphothreonine modification. Ser2335 is subject to Phosphoserine. At Arg2337 the chain carries Asymmetric dimethylarginine; alternate. At Arg2337 the chain carries Omega-N-methylarginine; alternate. Residues Ser2347, Ser2351, and Ser2360 each carry the phosphoserine modification. Thr2362 carries the phosphothreonine modification. Ser2365, Ser2368, Ser2381, Ser2384, Ser2404, and Ser2408 each carry phosphoserine. Polar residues-rich tracts occupy residues 2410–2443 (FSDQSRSVVQTTPVAGSQSLSSGTVAKSTSSASD) and 2467–2476 (TGAQQPSTLA). Positions 2487–2521 (SSSSSSSSSSSSSSSSSSSSSSSSGSSSSDSEGSS) are enriched in low complexity. A Phosphoserine modification is found at Ser2535. At Thr2537 the chain carries Phosphothreonine. Lys2541 participates in a covalent cross-link: Glycyl lysine isopeptide (Lys-Gly) (interchain with G-Cter in SUMO2). Thr2553 bears the Phosphothreonine mark. Positions 2562–2602 (SSSSSSSSSSSSSSSSSSSSSSSSSSSSSSSSSSSSSSSSS) are enriched in low complexity. The segment covering 2605–2622 (PAKPGPQALPKPASPKKP) has biased composition (pro residues). A phosphoserine mark is found at Ser2618, Ser2629, Ser2631, Ser2638, Ser2642, Ser2644, Ser2646, Ser2648, Ser2656, and Ser2660. Positions 2623–2643 (PPGERRSRSPRKPIDSLRDSR) are enriched in basic and acidic residues. A Phosphothreonine modification is found at Thr2689. Ser2691 is subject to Phosphoserine. Over residues 2694–2703 (SNRHRSSRSP) the composition is skewed to basic residues.

Belongs to the CWC21 family. In terms of assembly, component of pre-catalytic, catalytic and post-catalytic spliceosome complexes. Found in a pre-mRNA splicing complex with SFRS4, SFRS5, SNRP70, SNRPA1, SRRM1 and SRRM2. Component of the minor spliceosome, which splices U12-type introns. Interacts with DHX8. Interacts with CACTIN.

It is found in the nucleus. The protein resides in the nucleus speckle. Required for pre-mRNA splicing as component of the spliceosome. As a component of the minor spliceosome, involved in the splicing of U12-type introns in pre-mRNAs. This chain is Serine/arginine repetitive matrix protein 2 (Srrm2), found in Mus musculus (Mouse).